Reading from the N-terminus, the 138-residue chain is Proofreading thioesterase EntH (138 aa).

E64 acts as the Nucleophile or proton acceptor in catalysis.

The protein belongs to the thioesterase PaaI family. As to quaternary structure, homotetramer. Dimer of dimers. Interacts specifically with the aryl carrier protein (ArCP) domain of EntB.

It is found in the cytoplasm. The protein operates within siderophore biosynthesis; enterobactin biosynthesis. In terms of biological role, required for optimal enterobactin synthesis. Acts as a proofreading enzyme that prevents EntB misacylation by hydrolyzing the thioester bound existing between EntB and wrongly charged molecules. The polypeptide is Proofreading thioesterase EntH (Salmonella arizonae (strain ATCC BAA-731 / CDC346-86 / RSK2980)).